A 388-amino-acid polypeptide reads, in one-letter code: Queuine tRNA-ribosyltransferase (388 aa).

Residue D90 is the Proton acceptor of the active site. Substrate is bound by residues 90-94 (DSGGF), D144, Q205, and G232. The interval 263 to 269 (GVGTPED) is RNA binding. D282 functions as the Nucleophile in the catalytic mechanism. Residues 287-291 (TRNAR) form an RNA binding; important for wobble base 34 recognition region. 4 residues coordinate Zn(2+): C320, C322, C325, and H351.

This sequence belongs to the queuine tRNA-ribosyltransferase family. Homodimer. Within each dimer, one monomer is responsible for RNA recognition and catalysis, while the other monomer binds to the replacement base PreQ1. Zn(2+) is required as a cofactor.

It catalyses the reaction 7-aminomethyl-7-carbaguanine + guanosine(34) in tRNA = 7-aminomethyl-7-carbaguanosine(34) in tRNA + guanine. The protein operates within tRNA modification; tRNA-queuosine biosynthesis. Functionally, catalyzes the base-exchange of a guanine (G) residue with the queuine precursor 7-aminomethyl-7-deazaguanine (PreQ1) at position 34 (anticodon wobble position) in tRNAs with GU(N) anticodons (tRNA-Asp, -Asn, -His and -Tyr). Catalysis occurs through a double-displacement mechanism. The nucleophile active site attacks the C1' of nucleotide 34 to detach the guanine base from the RNA, forming a covalent enzyme-RNA intermediate. The proton acceptor active site deprotonates the incoming PreQ1, allowing a nucleophilic attack on the C1' of the ribose to form the product. After dissociation, two additional enzymatic reactions on the tRNA convert PreQ1 to queuine (Q), resulting in the hypermodified nucleoside queuosine (7-(((4,5-cis-dihydroxy-2-cyclopenten-1-yl)amino)methyl)-7-deazaguanosine). The polypeptide is Queuine tRNA-ribosyltransferase (Campylobacter curvus (strain 525.92)).